We begin with the raw amino-acid sequence, 184 residues long: Gastrokine-1 (184 aa).

The signal sequence occupies residues 1–20; it reads MKLTMFVVGLLGLLAAPGFA. The BRICHOS domain maps to 54–148; sequence NNGWDSWNSL…MCRGIPTYVA (95 aa). C81 and C140 are oxidised to a cystine.

It belongs to the gastrokine family. Expressed in the stomach. Highly expressed specifically in surface cells of the antrum mucosa from where it is secreted.

It is found in the secreted. The protein localises to the cytoplasmic granule. The protein resides in the golgi apparatus. Its function is as follows. Has mitogenic activity and may be involved in maintaining the integrity of the gastric mucosal epithelium. This is Gastrokine-1 (Gkn1) from Mus musculus (Mouse).